Here is a 384-residue protein sequence, read N- to C-terminus: Glutamate 5-kinase (384 aa).

An ATP-binding site is contributed by Lys24. Substrate is bound by residues Ser64, Asp149, and Asn161. Residues 181–182 (TD) and 223–229 (TGGMRTK) contribute to the ATP site. The region spanning 288-370 (PGAILIDAGA…RDIQTLLGYT (83 aa)) is the PUA domain.

Belongs to the glutamate 5-kinase family.

Its subcellular location is the cytoplasm. It carries out the reaction L-glutamate + ATP = L-glutamyl 5-phosphate + ADP. It participates in amino-acid biosynthesis; L-proline biosynthesis; L-glutamate 5-semialdehyde from L-glutamate: step 1/2. Its function is as follows. Catalyzes the transfer of a phosphate group to glutamate to form L-glutamate 5-phosphate. This is Glutamate 5-kinase from Xylella fastidiosa (strain M12).